A 251-amino-acid polypeptide reads, in one-letter code: GTP cyclohydrolase FolE2 (251 aa).

This sequence belongs to the GTP cyclohydrolase IV family.

The enzyme catalyses GTP + H2O = 7,8-dihydroneopterin 3'-triphosphate + formate + H(+). It participates in cofactor biosynthesis; 7,8-dihydroneopterin triphosphate biosynthesis; 7,8-dihydroneopterin triphosphate from GTP: step 1/1. Functionally, converts GTP to 7,8-dihydroneopterin triphosphate. In Desulfotalea psychrophila (strain LSv54 / DSM 12343), this protein is GTP cyclohydrolase FolE2.